The chain runs to 529 residues: DnaJ homolog l(2)tid, mitochondrial (529 aa).

The transit peptide at 1–22 (MISCKNLCVLRQLPLKNCRRHY) directs the protein to the mitochondrion. R35 carries the post-translational modification Omega-N-methylarginine. One can recognise a J domain in the interval 80 to 145 (DYYATLGVAK…QKRREYDTYG (66 aa)). K121 is modified (N6-acetyllysine). Residues 230 to 308 (GVNKDVNVNV…CEGKGQTVQR (79 aa)) form a CR-type zinc finger. Residues C243, C246, C260, C263, C282, C285, C296, and C299 each coordinate Zn(2+). One copy of the CXXCXGXG motif; approximate repeat lies at 243-250 (CPKCAGSK). The stretch at 260-267 (CQYCNGTG) is one CXXCXGXG motif repeat. A CXXCXGXG motif; approximate repeat occupies 282 to 289 (CRYCQGTR). The CXXCXGXG motif repeat unit spans residues 296 to 303 (CAECEGKG). The segment at 441-529 (TPGQIHGMAQ…FLNKIKSMFN (89 aa)) is disordered. Basic and acidic residues predominate over residues 497 to 508 (QSEKSETRRKDQ).

It localises to the mitochondrion outer membrane. Functionally, may act as a tumor suppressor in larval imaginal disks. This Drosophila virilis (Fruit fly) protein is DnaJ homolog l(2)tid, mitochondrial (l(2)tid).